A 427-amino-acid polypeptide reads, in one-letter code: Gamma-glutamyl phosphate reductase (427 aa).

Belongs to the gamma-glutamyl phosphate reductase family.

The protein localises to the cytoplasm. The enzyme catalyses L-glutamate 5-semialdehyde + phosphate + NADP(+) = L-glutamyl 5-phosphate + NADPH + H(+). It participates in amino-acid biosynthesis; L-proline biosynthesis; L-glutamate 5-semialdehyde from L-glutamate: step 2/2. Functionally, catalyzes the NADPH-dependent reduction of L-glutamate 5-phosphate into L-glutamate 5-semialdehyde and phosphate. The product spontaneously undergoes cyclization to form 1-pyrroline-5-carboxylate. The sequence is that of Gamma-glutamyl phosphate reductase from Rhizobium johnstonii (strain DSM 114642 / LMG 32736 / 3841) (Rhizobium leguminosarum bv. viciae).